A 917-amino-acid chain; its full sequence is Isoleucine--tRNA ligase (917 aa).

L-isoleucyl-5'-AMP contacts are provided by P56, H67, E554, G555, D557, Q558, and H585. Residues 57-67 carry the 'HIGH' region motif; that stretch reads PYANGNLHMGH. Positions 595-599 match the 'KMSKS' region motif; it reads KMSKS. K598 is an ATP binding site. R632 and Q640 together coordinate tRNA(Ile). Residues C886, C889, C906, and C909 each coordinate Zn(2+).

This sequence belongs to the class-I aminoacyl-tRNA synthetase family. IleS type 1 subfamily. In terms of assembly, monomer. It depends on Zn(2+) as a cofactor.

The protein resides in the cytoplasm. The catalysed reaction is tRNA(Ile) + L-isoleucine + ATP = L-isoleucyl-tRNA(Ile) + AMP + diphosphate. Functionally, catalyzes the attachment of isoleucine to tRNA(Ile). As IleRS can inadvertently accommodate and process structurally similar amino acids such as valine, to avoid such errors it has two additional distinct tRNA(Ile)-dependent editing activities. One activity is designated as 'pretransfer' editing and involves the hydrolysis of activated Val-AMP. The other activity is designated 'posttransfer' editing and involves deacylation of mischarged Val-tRNA(Ile). The sequence is that of Isoleucine--tRNA ligase (ileS) from Staphylococcus aureus.